Consider the following 91-residue polypeptide: MSITQERKQKLIKEYAITENDTGSSAVQCAILTERINNLTEHFKFNHKDHTSRRGLLILVGRRRRLLNYIKKNNVSEYLDLISKLGIRKIK.

It belongs to the universal ribosomal protein uS15 family. Part of the 30S ribosomal subunit. Forms a bridge to the 50S subunit in the 70S ribosome, contacting the 23S rRNA.

Its function is as follows. One of the primary rRNA binding proteins, it binds directly to 16S rRNA where it helps nucleate assembly of the platform of the 30S subunit by binding and bridging several RNA helices of the 16S rRNA. Functionally, forms an intersubunit bridge (bridge B4) with the 23S rRNA of the 50S subunit in the ribosome. The polypeptide is Small ribosomal subunit protein uS15 (Rickettsia felis (strain ATCC VR-1525 / URRWXCal2) (Rickettsia azadi)).